The chain runs to 754 residues: Glutathione biosynthesis bifunctional protein GshAB (754 aa).

A glutamate--cysteine ligase region spans residues 1–333 (MHINQLLQHA…KAQKLNDKIA (333 aa)). The 264-residue stretch at 489-752 (KKILRENGYP…LAKLFPEIST (264 aa)) folds into the ATP-grasp domain. Position 516 to 574 (516 to 574 (SQIKNKPIVVKPKTTNFGLGISIFETAASHNDYEKALDIAFIEDYSVLVEEFIPGTEYR)) interacts with ATP. Positions 696, 717, and 719 each coordinate Mg(2+). Mn(2+) contacts are provided by aspartate 696, glutamate 717, and asparagine 719.

In the N-terminal section; belongs to the glutamate--cysteine ligase type 1 family. Type 2 subfamily. In terms of assembly, monomer. It depends on Mg(2+) as a cofactor. Mn(2+) is required as a cofactor.

The enzyme catalyses L-cysteine + L-glutamate + ATP = gamma-L-glutamyl-L-cysteine + ADP + phosphate + H(+). The catalysed reaction is gamma-L-glutamyl-L-cysteine + glycine + ATP = glutathione + ADP + phosphate + H(+). It functions in the pathway sulfur metabolism; glutathione biosynthesis; glutathione from L-cysteine and L-glutamate: step 1/2. The protein operates within sulfur metabolism; glutathione biosynthesis; glutathione from L-cysteine and L-glutamate: step 2/2. Functionally, synthesizes glutathione from L-glutamate and L-cysteine via gamma-L-glutamyl-L-cysteine. The polypeptide is Glutathione biosynthesis bifunctional protein GshAB (Streptococcus mutans serotype c (strain ATCC 700610 / UA159)).